A 430-amino-acid chain; its full sequence is Gamma-glutamyl phosphate reductase (430 aa).

It belongs to the gamma-glutamyl phosphate reductase family.

The protein localises to the cytoplasm. The catalysed reaction is L-glutamate 5-semialdehyde + phosphate + NADP(+) = L-glutamyl 5-phosphate + NADPH + H(+). The protein operates within amino-acid biosynthesis; L-proline biosynthesis; L-glutamate 5-semialdehyde from L-glutamate: step 2/2. In terms of biological role, catalyzes the NADPH-dependent reduction of L-glutamate 5-phosphate into L-glutamate 5-semialdehyde and phosphate. The product spontaneously undergoes cyclization to form 1-pyrroline-5-carboxylate. The sequence is that of Gamma-glutamyl phosphate reductase from Rhodopseudomonas palustris (strain BisB5).